Consider the following 312-residue polypeptide: tRNA uridine(34) hydroxylase (312 aa).

The region spanning 130-225 is the Rhodanese domain; it reads RGDDVVFFDG…YGEKYGNDGL (96 aa). The Cysteine persulfide intermediate role is filled by C185.

Belongs to the TrhO family.

It catalyses the reaction uridine(34) in tRNA + AH2 + O2 = 5-hydroxyuridine(34) in tRNA + A + H2O. Catalyzes oxygen-dependent 5-hydroxyuridine (ho5U) modification at position 34 in tRNAs. This Corynebacterium diphtheriae (strain ATCC 700971 / NCTC 13129 / Biotype gravis) protein is tRNA uridine(34) hydroxylase.